Consider the following 452-residue polypeptide: Pentatricopeptide repeat-containing protein At2g30780 (452 aa).

7 PPR repeats span residues 137-171 (TASV…THCA), 173-207 (TVVT…KLPP), 208-242 (NSVT…PVEP), 243-273 (DTDT…IKDQ), 350-384 (KSSI…GWKL), 385-419 (CRSL…NYGL), and 420-452 (VTKT…KRGL).

This sequence belongs to the PPR family. P subfamily.

The polypeptide is Pentatricopeptide repeat-containing protein At2g30780 (Arabidopsis thaliana (Mouse-ear cress)).